A 106-amino-acid chain; its full sequence is EspC protein homolog (106 aa).

This sequence belongs to the EspC family.

The sequence is that of EspC protein homolog from Mycobacterium leprae (strain TN).